We begin with the raw amino-acid sequence, 222 residues long: Eukaryotic translation initiation factor 3 subunit K (222 aa).

In terms of domain architecture, PCI spans Tyr-46–Lys-208.

Belongs to the eIF-3 subunit K family. Component of the eukaryotic translation initiation factor 3 (eIF-3) complex. The eIF-3 complex interacts with pix.

It is found in the cytoplasm. Functionally, component of the eukaryotic translation initiation factor 3 (eIF-3) complex, which is involved in protein synthesis of a specialized repertoire of mRNAs and, together with other initiation factors, stimulates binding of mRNA and methionyl-tRNAi to the 40S ribosome. The eIF-3 complex specifically targets and initiates translation of a subset of mRNAs involved in cell proliferation. This Drosophila erecta (Fruit fly) protein is Eukaryotic translation initiation factor 3 subunit K.